Reading from the N-terminus, the 324-residue chain is Methyltransferase pytC (324 aa).

The protein belongs to the methyltransferase superfamily. LaeA methyltransferase family.

The protein operates within secondary metabolite biosynthesis. In terms of biological role, methyltransferase; part of the gene cluster that mediates the biosynthesis of pyranterreones, a family of antioxidative compounds. The first step of pyranonigrins biosynthesis is performed by the hybrid PKS-NRPS synthetase pytA that condenses 4 malonyl-CoA units ato the acetyl starter unit by the modular PKS of pytA. The acyl chain is then connected to an L-serine through the amide bond by the modular NRPS of pytA. A tetramic acid is formed and released from the PKS-NRPS pytA to give pyranterreone 5 with the help of the thioesterase pytI. Pyranterreone 5 could be methylated by pytC to afford pyranterreone 6. Both pyranterreones 5 and 6 are subsequently oxidized by the FAD-linked oxidoreductase pytB and the cytochrome P450 monooxygenase pytD to form the fused gamma-pyrone core, resulting in pyranterreones 7 and 11, respectively. The hydroxy group at C-8 of pyranterreones 7 and 11 are dehydrated by the aspartyl protease pytH to form a delta-7 double bond to give pyranterreones 3 and 1, 2 accordingly. The exo-methylene of pyranterreone 3 could be reduced into a pendant methyl by reductase pytE to provide pyranterreone 4, also known as cordylactam. Pyranterreone 4 can be reconverted to pyranterreone 3 through pytB-catalyzed dehydrogenation or further oxidized to pyranterreones 9 and 10. In Aspergillus terreus (strain NIH 2624 / FGSC A1156), this protein is Methyltransferase pytC.